Consider the following 413-residue polypeptide: 1-deoxy-D-xylulose 5-phosphate reductoisomerase (413 aa).

NADPH contacts are provided by Thr-28, Gly-29, Ser-30, Ile-31, Gly-54, Arg-55, Asn-56, and Asn-142. Lys-143 contacts 1-deoxy-D-xylulose 5-phosphate. Residue Glu-144 participates in NADPH binding. Residue Asp-168 participates in Mn(2+) binding. 4 residues coordinate 1-deoxy-D-xylulose 5-phosphate: Ser-169, Glu-170, Ser-194, and His-217. Glu-170 is a Mn(2+) binding site. Gly-223 is a binding site for NADPH. Residues Ser-230, Asn-235, Lys-236, and Glu-239 each coordinate 1-deoxy-D-xylulose 5-phosphate. Glu-239 contributes to the Mn(2+) binding site.

Belongs to the DXR family. The cofactor is Mg(2+). It depends on Mn(2+) as a cofactor.

It carries out the reaction 2-C-methyl-D-erythritol 4-phosphate + NADP(+) = 1-deoxy-D-xylulose 5-phosphate + NADPH + H(+). It functions in the pathway isoprenoid biosynthesis; isopentenyl diphosphate biosynthesis via DXP pathway; isopentenyl diphosphate from 1-deoxy-D-xylulose 5-phosphate: step 1/6. In terms of biological role, catalyzes the NADPH-dependent rearrangement and reduction of 1-deoxy-D-xylulose-5-phosphate (DXP) to 2-C-methyl-D-erythritol 4-phosphate (MEP). The chain is 1-deoxy-D-xylulose 5-phosphate reductoisomerase from Thermosynechococcus vestitus (strain NIES-2133 / IAM M-273 / BP-1).